The chain runs to 390 residues: Chorismate synthase (390 aa).

2 residues coordinate NADP(+): arginine 39 and arginine 45. FMN-binding positions include 132–134, 253–254, glycine 298, 313–317, and arginine 339; these read RSS, NA, and KPIPT.

It belongs to the chorismate synthase family. In terms of assembly, homotetramer. Requires FMNH2 as cofactor.

The catalysed reaction is 5-O-(1-carboxyvinyl)-3-phosphoshikimate = chorismate + phosphate. It participates in metabolic intermediate biosynthesis; chorismate biosynthesis; chorismate from D-erythrose 4-phosphate and phosphoenolpyruvate: step 7/7. Functionally, catalyzes the anti-1,4-elimination of the C-3 phosphate and the C-6 proR hydrogen from 5-enolpyruvylshikimate-3-phosphate (EPSP) to yield chorismate, which is the branch point compound that serves as the starting substrate for the three terminal pathways of aromatic amino acid biosynthesis. This reaction introduces a second double bond into the aromatic ring system. This is Chorismate synthase from Bacillus velezensis (strain DSM 23117 / BGSC 10A6 / LMG 26770 / FZB42) (Bacillus amyloliquefaciens subsp. plantarum).